A 661-amino-acid polypeptide reads, in one-letter code: uncharacterized protein (661 aa).

Transmembrane regions (helical) follow at residues 27-47 (LAIG…VSGA), 68-88 (VGFF…IHVV), 116-136 (LWLG…TGVG), 150-170 (VAAS…LVVA), 179-199 (WLGH…TAVT), 214-234 (AAIV…AAAL), 251-271 (GALA…GWAV), 279-299 (GLLA…RLLV), 313-333 (GAAL…VMTA), 369-389 (SLIG…FAAL), 396-416 (WPVG…FTSG), 435-455 (MTLN…TLAL), 488-508 (PITA…TPLF), 519-539 (EFMA…IIGI), 552-572 (IGLL…LMTM), and 599-619 (GGGI…VALV).

The protein to M.leprae ML1998.

Its subcellular location is the cell membrane. This is an uncharacterized protein from Mycobacterium tuberculosis (strain CDC 1551 / Oshkosh).